Reading from the N-terminus, the 226-residue chain is Cytidylate kinase (226 aa).

ATP is bound at residue 10-18; that stretch reads GPASSGKST.

It belongs to the cytidylate kinase family. Type 1 subfamily.

The protein resides in the cytoplasm. It catalyses the reaction CMP + ATP = CDP + ADP. The enzyme catalyses dCMP + ATP = dCDP + ADP. This Streptococcus uberis (strain ATCC BAA-854 / 0140J) protein is Cytidylate kinase.